Here is a 732-residue protein sequence, read N- to C-terminus: MMLASSAPTAPSLLPPSSQPSAATTRADDCSSSTSPTNTSASDASMEMLTSLMNGAVAAAAAPGNALVKQESPPLTTPPLFNPDLALLQFSQLFQAQQAMVQFHNQQKQQQQIIQQQQQQQQQQQQNQNPSQSQSSSSDRKRSYPCTFQYCVICQKDVHSSKLPCHIRQCHVAKPMFQCPACDFTSTYSKNNVKSHMVSLHGLAGDPISYMDKYAGQVEEFMKLCFPNVRGRGRPMQGRSSPKSPTSPTQPGRRGSQASSLPSRRNTVSQNDLLATLQQHQQQQAAFHPLRNLRFNPLQSIFPAVLANNNNNSVLATNKHVNNFLIKQEESEVPPITMPMQDLKTMLDANSSPSPISLSSSIIPIQPIKPGENAQPKYMKSLDWTILNDLQMKGTVFADCRSNMELYAENIARKIENTKAFQSFVLSDDMRTVVEEVRSRVSIQLFEVMFAIHRMDIKVLNQNLVDSLLQIAPTNSDAQLLRKMENLSDPNEEFLLGLTKIDHIEEKLETMKHMYRFPEQVELLKENIIKYEIAVKVLSESRALRNVMQLVLAILNIGFFDDRQCLSINGFSVSDISSILSTNTPSGQSVQSILVTILKDEINLDLDELFGLIDVLEKIENDDVNSVAQDLMVLDDKTVRAEKEMEHSGSNIPLSEFVENAKTISKERWEHFKSLKTSIERLTIYLGSPLPRHQNLDAHSPFNNVLQMLRSLKTAIELDDASDDHHINVSSP.

Low complexity-rich tracts occupy residues 1-12, 19-45, 121-137, and 240-251; these read MMLASSAPTAPS, QPSAATTRADDCSSSTSPTNTSASDAS, QQQQQQNQNPSQSQSSS, and SSPKSPTSPTQP. An N-terminal signal peptide occupies residues 1 to 27; it reads MMLASSAPTAPSLLPPSSQPSAATTRA. Disordered stretches follow at residues 1–45, 121–141, and 232–267; these read MMLA…SDAS, QQQQQQNQNPSQSQSSSSDRK, and RGRPMQGRSSPKSPTSPTQPGRRGSQASSLPSRRNT. Over residues 256 to 267 the composition is skewed to polar residues; that stretch reads SQASSLPSRRNT. One can recognise an FH2 domain in the interval 355 to 732; it reads PISLSSSIIP…DDHHINVSSP (378 aa).

Belongs to the formin homology family. Transiently expressed in all mesoderm derived progenitor body wall muscle cells before they differentiate.

Acts redundantly with hlh-1 to promote body wall muscle cell and coelomocyte specification in postembryonic mesoderm progenitors, probably through suppression of sem-2. This is Formin-homology and zinc finger domains protein 1 from Caenorhabditis elegans.